The chain runs to 481 residues: Protein nucleotidyltransferase YdiU (481 aa).

The ATP site is built by G85, G87, R88, K108, D120, G121, R172, and R179. D248 functions as the Proton acceptor in the catalytic mechanism. Mg(2+) is bound by residues N249 and D258. An ATP-binding site is contributed by D258.

This sequence belongs to the SELO family. Mg(2+) is required as a cofactor. Requires Mn(2+) as cofactor.

It catalyses the reaction L-seryl-[protein] + ATP = 3-O-(5'-adenylyl)-L-seryl-[protein] + diphosphate. The catalysed reaction is L-threonyl-[protein] + ATP = 3-O-(5'-adenylyl)-L-threonyl-[protein] + diphosphate. The enzyme catalyses L-tyrosyl-[protein] + ATP = O-(5'-adenylyl)-L-tyrosyl-[protein] + diphosphate. It carries out the reaction L-histidyl-[protein] + UTP = N(tele)-(5'-uridylyl)-L-histidyl-[protein] + diphosphate. It catalyses the reaction L-seryl-[protein] + UTP = O-(5'-uridylyl)-L-seryl-[protein] + diphosphate. The catalysed reaction is L-tyrosyl-[protein] + UTP = O-(5'-uridylyl)-L-tyrosyl-[protein] + diphosphate. Functionally, nucleotidyltransferase involved in the post-translational modification of proteins. It can catalyze the addition of adenosine monophosphate (AMP) or uridine monophosphate (UMP) to a protein, resulting in modifications known as AMPylation and UMPylation. This chain is Protein nucleotidyltransferase YdiU, found in Cereibacter sphaeroides (strain ATCC 17029 / ATH 2.4.9) (Rhodobacter sphaeroides).